The sequence spans 259 residues: tRNA (guanine-N(7)-)-methyltransferase (259 aa).

The interval 1–36 (MTFPSHNPPETGHPSAAPDEALPAAEAPVPGDPEAR) is disordered. The span at 14 to 29 (PSAAPDEALPAAEAPV) shows a compositional bias: low complexity. S-adenosyl-L-methionine contacts are provided by Glu91, Glu116, Asp143, and Asp166. Asp166 is a catalytic residue. Residues Lys170, Asp202, and 237 to 240 (TKFE) contribute to the substrate site.

This sequence belongs to the class I-like SAM-binding methyltransferase superfamily. TrmB family.

The enzyme catalyses guanosine(46) in tRNA + S-adenosyl-L-methionine = N(7)-methylguanosine(46) in tRNA + S-adenosyl-L-homocysteine. The protein operates within tRNA modification; N(7)-methylguanine-tRNA biosynthesis. Its function is as follows. Catalyzes the formation of N(7)-methylguanine at position 46 (m7G46) in tRNA. The protein is tRNA (guanine-N(7)-)-methyltransferase of Aromatoleum aromaticum (strain DSM 19018 / LMG 30748 / EbN1) (Azoarcus sp. (strain EbN1)).